A 396-amino-acid chain; its full sequence is Bifunctional enzyme Fae/Hps (396 aa).

A formaldehyde-activating enzyme region spans residues 1–161 (MYQIGEALIG…YEKDRGVHAI (161 aa)). The active-site Proton donor is His-17. Substrate contacts are provided by Asp-19, Leu-48, Lys-66, Thr-68, and Gln-83. Residues 162 to 396 (MGYKITRLWD…IDQYRIMTDF (235 aa)) are 3-hexulose-6-phosphate synthase.

This sequence in the N-terminal section; belongs to the formaldehyde-activating enzyme family. The protein in the C-terminal section; belongs to the HPS/KGPDC family. HPS subfamily.

It carries out the reaction 5,6,7,8-tetrahydromethanopterin + formaldehyde = 5,10-methylenetetrahydromethanopterin + H2O. It catalyses the reaction D-ribulose 5-phosphate + formaldehyde = D-arabino-hex-3-ulose 6-phosphate. Its pathway is carbohydrate biosynthesis; D-ribose 5-phosphate biosynthesis. Catalyzes the condensation of formaldehyde with tetrahydromethanopterin (H(4)MPT) to 5,10-methylenetetrahydromethanopterin. Functionally, catalyzes the reversible formation of ribulose-5-phosphate and formaldehyde from 3-hexulose-6-phosphate. The chain is Bifunctional enzyme Fae/Hps from Methanocella arvoryzae (strain DSM 22066 / NBRC 105507 / MRE50).